The following is a 295-amino-acid chain: N-acetylmuramic acid 6-phosphate etherase (295 aa).

Positions 53-216 (AIQRFNNGGR…STMTMIGVGK (164 aa)) constitute an SIS domain. The active-site Proton donor is Glu-81. The active site involves Glu-112.

It belongs to the GCKR-like family. MurNAc-6-P etherase subfamily. As to quaternary structure, homodimer.

The enzyme catalyses N-acetyl-D-muramate 6-phosphate + H2O = N-acetyl-D-glucosamine 6-phosphate + (R)-lactate. It participates in amino-sugar metabolism; N-acetylmuramate degradation. Specifically catalyzes the cleavage of the D-lactyl ether substituent of MurNAc 6-phosphate, producing GlcNAc 6-phosphate and D-lactate. This is N-acetylmuramic acid 6-phosphate etherase from Staphylococcus epidermidis (strain ATCC 35984 / DSM 28319 / BCRC 17069 / CCUG 31568 / BM 3577 / RP62A).